Consider the following 228-residue polypeptide: 2,3-bisphosphoglycerate-dependent phosphoglycerate mutase (228 aa).

Residues 8–15 (RHGQSVWN), 21–22 (TG), R60, 87–90 (ERHY), K98, 114–115 (RR), and 183–184 (GN) each bind substrate. Catalysis depends on H9, which acts as the Tele-phosphohistidine intermediate. E87 serves as the catalytic Proton donor/acceptor.

This sequence belongs to the phosphoglycerate mutase family. BPG-dependent PGAM subfamily.

It catalyses the reaction (2R)-2-phosphoglycerate = (2R)-3-phosphoglycerate. The protein operates within carbohydrate degradation; glycolysis; pyruvate from D-glyceraldehyde 3-phosphate: step 3/5. Catalyzes the interconversion of 2-phosphoglycerate and 3-phosphoglycerate. The sequence is that of 2,3-bisphosphoglycerate-dependent phosphoglycerate mutase from Staphylococcus carnosus (strain TM300).